The primary structure comprises 569 residues: Potassium-transporting ATPase potassium-binding subunit (569 aa).

10 helical membrane passes run 11–31, 64–84, 135–155, 179–199, 258–278, 285–305, 384–404, 423–443, 490–510, and 531–551; these read LLLALVFLTIKPLGLYIACVF, LAYTLAMLAFNAAGFLALYGI, AGLAVQNFLSAATGIAIALAV, LYLLLPMSIVLALVFVWMGIP, FNILAMMSITMALIYAFGKMV, WALIASVAVLLIAGIAAVYIA, GLYGLIVFCVLTVFVAGLMVG, MLAVLVLPFAILGFSAIAAVL, LGISMALGRFAYAVPVLAIAG, and LFVGLLVAIIIILGGLQYFPA.

It belongs to the KdpA family. As to quaternary structure, the system is composed of three essential subunits: KdpA, KdpB and KdpC.

The protein resides in the cell inner membrane. In terms of biological role, part of the high-affinity ATP-driven potassium transport (or Kdp) system, which catalyzes the hydrolysis of ATP coupled with the electrogenic transport of potassium into the cytoplasm. This subunit binds the periplasmic potassium ions and delivers the ions to the membrane domain of KdpB through an intramembrane tunnel. This chain is Potassium-transporting ATPase potassium-binding subunit, found in Allorhizobium ampelinum (strain ATCC BAA-846 / DSM 112012 / S4) (Agrobacterium vitis (strain S4)).